We begin with the raw amino-acid sequence, 598 residues long: Chromodomain Y-like protein (598 aa).

A disordered region spans residues 1 to 76 (MTFQASHRSA…VDKRKNKKGK (76 aa)). The span at 44-56 (PSISVSSEQSGAQ) shows a compositional bias: polar residues. One can recognise a Chromo domain in the interval 61–121 (LQVERIVDKR…RHTEKQKEST (61 aa)). Positions 61–309 (LQVERIVDKR…NIQTSVTGVT (249 aa)) are interaction with EZH2. Residues 65–76 (RIVDKRKNKKGK) are compositionally biased toward basic and acidic residues. Ser-88 bears the Phosphoserine mark. Residues 112–121 (RHTEKQKEST) show a composition bias toward basic and acidic residues. The disordered stretch occupies residues 112-149 (RHTEKQKESTLTRTNRTSPNNARKQISRSTNSNFSKTS). Residues 122–149 (LTRTNRTSPNNARKQISRSTNSNFSKTS) are compositionally biased toward polar residues. The residue at position 135 (Lys-135) is an N6,N6,N6-trimethyllysine; by EHMT2; alternate. Position 135 is an N6,N6-dimethyllysine; by EHMT2; alternate (Lys-135). Lys-135 bears the N6-methyllysine; by EHMT2; alternate mark. Residues Ser-170, Ser-201, and Ser-216 each carry the phosphoserine modification. A disordered region spans residues 204 to 226 (KSRTAVDGFQSESPEKLDPVEQG). Residues 362–594 (SENNSLNPEV…DSMLKYLQRK (233 aa)) form an acetyl-CoA-binding domain region.

As to quaternary structure, forms multimers and multimerization is required for stable binding to chromatin. Interacts with HDAC1 and HDAC2 via its C-terminal acetyl-CoA-binding domain. Interacts with EZH2, EED, SUZ12, REST, EHMT1 and EHMT2. Part of a complex containing at least CDYL, REST, WIZ, SETB1, EHMT1 and EHMT2. Part of a complex containing at least CDYL, MIER1, MIER2, HDAC1 and HDAC2. Interacts with CHAF1A and CHAF1B; bridging the CAF-1 complex to the MCM2-7 (MCM) complex. Interacts with MCM3 and MCM5; bridging the CAF-1 complex to the MCM2-7 (MCM) complex. Recruited to Xist RNA-coated X chromosome. Interacts with EHMT2 and PRDM9; interaction only takes place when PRDM9 is bound to hotspot DNA. Expressed in the hippocampus with reduced expression in epileptic tissue compared to normal adjacent tissue (at protein level). Ubiquitous. Expressed at moderate levels in all tissues examined. Isoform 2: Most abundantly expressed isoform.

It is found in the nucleus. It localises to the chromosome. It carries out the reaction 3-hydroxybutanoyl-CoA = (2E)-butenoyl-CoA + H2O. Its function is as follows. Chromatin reader protein that recognizes and binds histone H3 trimethylated at 'Lys-9', dimethylated at 'Lys-27' and trimethylated at 'Lys-27' (H3K9me3, H3K27me2 and H3K27me3, respectively). Part of multimeric repressive chromatin complexes, where it is required for transmission and restoration of repressive histone marks, thereby preserving the epigenetic landscape. Required for chromatin targeting and maximal enzymatic activity of Polycomb repressive complex 2 (PRC2); acts as a positive regulator of PRC2 activity by bridging the pre-existing histone H3K27me3 and newly recruited PRC2 on neighboring nucleosomes. Acts as a corepressor for REST by facilitating histone-lysine N-methyltransferase EHMT2 recruitment and H3K9 dimethylation at REST target genes for repression. Involved in X chromosome inactivation in females: recruited to Xist RNA-coated X chromosome and facilitates propagation of H3K9me2 by anchoring EHMT2. Promotes EZH2 accumulation and H3K27me3 methylation at DNA double strand breaks (DSBs), thereby facilitating transcriptional repression at sites of DNA damage and homology-directed repair of DSBs. Required for neuronal migration during brain development by repressing expression of RHOA. By repressing the expression of SCN8A, contributes to the inhibition of intrinsic neuronal excitability and epileptogenesis. In addition to acting as a chromatin reader, acts as a hydro-lyase. Shows crotonyl-coA hydratase activity by mediating the conversion of crotonyl-CoA ((2E)-butenoyl-CoA) to beta-hydroxybutyryl-CoA (3-hydroxybutanoyl-CoA), thereby acting as a negative regulator of histone crotonylation. Histone crotonylation is required during spermatogenesis; down-regulation of histone crotonylation by CDYL regulates the reactivation of sex chromosome-linked genes in round spermatids and histone replacement in elongating spermatids. By regulating histone crotonylation and trimethylation of H3K27, may be involved in stress-induced depression-like behaviors, possibly by regulating VGF expression. Functionally, not able to recognize and bind histone H3K9me3, histone H3K27me2 and histone H3K27me3, due to the presence of a N-terminal extension that inactivates the chromo domain. In terms of biological role, not able to recognize and bind histone H3K9me3, histone H3K27me2 and histone H3K27me3, due to the absence of the chromo domain. Acts as a negative regulator of isoform 2 by displacing isoform 2 from chromatin. The protein is Chromodomain Y-like protein of Homo sapiens (Human).